A 392-amino-acid polypeptide reads, in one-letter code: Formate-dependent phosphoribosylglycinamide formyltransferase (392 aa).

N(1)-(5-phospho-beta-D-ribosyl)glycinamide contacts are provided by residues glutamate 20–leucine 21 and glutamate 80. ATP is bound by residues arginine 112, lysine 153, serine 158–glutamine 163, glutamate 193–isoleucine 196, and glutamate 201. Residues arginine 117–leucine 306 form the ATP-grasp domain. Mg(2+)-binding residues include glutamate 265 and glutamate 277. Residues aspartate 284, lysine 354, and arginine 361–arginine 362 each bind N(1)-(5-phospho-beta-D-ribosyl)glycinamide.

It belongs to the PurK/PurT family. As to quaternary structure, homodimer.

It catalyses the reaction N(1)-(5-phospho-beta-D-ribosyl)glycinamide + formate + ATP = N(2)-formyl-N(1)-(5-phospho-beta-D-ribosyl)glycinamide + ADP + phosphate + H(+). It functions in the pathway purine metabolism; IMP biosynthesis via de novo pathway; N(2)-formyl-N(1)-(5-phospho-D-ribosyl)glycinamide from N(1)-(5-phospho-D-ribosyl)glycinamide (formate route): step 1/1. In terms of biological role, involved in the de novo purine biosynthesis. Catalyzes the transfer of formate to 5-phospho-ribosyl-glycinamide (GAR), producing 5-phospho-ribosyl-N-formylglycinamide (FGAR). Formate is provided by PurU via hydrolysis of 10-formyl-tetrahydrofolate. This is Formate-dependent phosphoribosylglycinamide formyltransferase from Geobacter metallireducens (strain ATCC 53774 / DSM 7210 / GS-15).